We begin with the raw amino-acid sequence, 200 residues long: ADP-ribose 1''-phosphate phosphatase (200 aa).

The Macro domain occupies 1-200 (MDPPSVRSKI…EVTVVRPHGG (200 aa)). Residues 15-17 (GDL), 29-31 (ACN), 36-41 (WGKGIA), and 169-175 (FNAGLFG) each bind substrate.

This sequence belongs to the POA1 family.

It catalyses the reaction ADP-alpha-D-ribose 1''-phosphate + H2O = ADP-D-ribose + phosphate. In terms of biological role, highly specific phosphatase involved in the metabolism of ADP-ribose 1''-phosphate (Appr1p) which is produced as a consequence of tRNA splicing. This is ADP-ribose 1''-phosphate phosphatase (poa1) from Aspergillus fumigatus (strain ATCC MYA-4609 / CBS 101355 / FGSC A1100 / Af293) (Neosartorya fumigata).